A 492-amino-acid polypeptide reads, in one-letter code: Homoserine O-acetyltransferase (492 aa).

The region spanning Asn-47–Leu-352 is the AB hydrolase-1 domain. Ser-152 acts as the Nucleophile in catalysis. Arg-221 is a substrate binding site. Catalysis depends on residues Asp-315 and His-348. A substrate-binding site is contributed by Asp-349. 2 CBS domains span residues Met-375 to Ile-431 and Met-440 to Ile-492.

The protein belongs to the AB hydrolase superfamily. MetX family. As to quaternary structure, homodimer.

It is found in the cytoplasm. The enzyme catalyses L-homoserine + acetyl-CoA = O-acetyl-L-homoserine + CoA. The protein operates within amino-acid biosynthesis; L-methionine biosynthesis via de novo pathway; O-acetyl-L-homoserine from L-homoserine: step 1/1. Transfers an acetyl group from acetyl-CoA to L-homoserine, forming acetyl-L-homoserine. This chain is Homoserine O-acetyltransferase, found in Methanococcus vannielii (strain ATCC 35089 / DSM 1224 / JCM 13029 / OCM 148 / SB).